Here is a 486-residue protein sequence, read N- to C-terminus: Glucose-6-phosphate 1-dehydrogenase (486 aa).

NADP(+)-binding positions include 13 to 20 (GGTGDLAK), Arg47, 86 to 87 (DV), and Lys149. Substrate contacts are provided by His179, Lys183, Glu217, and Asp236. His241 (proton acceptor) is an active-site residue. Lys339 and Lys344 together coordinate substrate.

Belongs to the glucose-6-phosphate dehydrogenase family. As to quaternary structure, homodimer.

It carries out the reaction D-glucose 6-phosphate + NAD(+) = 6-phospho-D-glucono-1,5-lactone + NADH + H(+). It catalyses the reaction D-glucose 6-phosphate + NADP(+) = 6-phospho-D-glucono-1,5-lactone + NADPH + H(+). It functions in the pathway carbohydrate degradation; pentose phosphate pathway; D-ribulose 5-phosphate from D-glucose 6-phosphate (oxidative stage): step 1/3. Its function is as follows. Catalyzes the oxidation of glucose 6-phosphate to 6-phosphogluconolactone. Can utilize either NADP(+) or NAD(+). In Leuconostoc mesenteroides, this protein is Glucose-6-phosphate 1-dehydrogenase.